We begin with the raw amino-acid sequence, 359 residues long: Membrane-bound lytic murein transglycosylase C (359 aa).

An N-terminal signal peptide occupies residues 1–16 (MKKYLALALIAPLLIS). The N-palmitoyl cysteine moiety is linked to residue cysteine 17. A lipid anchor (S-diacylglycerol cysteine) is attached at cysteine 17.

Belongs to the transglycosylase Slt family.

Its subcellular location is the cell outer membrane. The enzyme catalyses Exolytic cleavage of the (1-&gt;4)-beta-glycosidic linkage between N-acetylmuramic acid (MurNAc) and N-acetylglucosamine (GlcNAc) residues in peptidoglycan, from either the reducing or the non-reducing ends of the peptidoglycan chains, with concomitant formation of a 1,6-anhydrobond in the MurNAc residue.. Murein-degrading enzyme. May play a role in recycling of muropeptides during cell elongation and/or cell division. This is Membrane-bound lytic murein transglycosylase C from Shigella flexneri serotype 5b (strain 8401).